A 283-amino-acid chain; its full sequence is Phosphatidylglycerol--prolipoprotein diacylglyceryl transferase (283 aa).

The next 7 helical transmembrane spans lie at 18–38 (LGGIEVHWYGLAYACAIVVAF), 62–82 (YFLWAELGIVLGARIGYVLIY), 106–126 (FIGIRGMSYHGGLVGFLIASY), 136–156 (LLIYLDLIAISLPLGYVFGRI), 190–210 (PSQLIEAFLEGVVVFLMVMWA), 218–238 (GLLIVVYGLGYSLMRFIAEFY), and 252–272 (LSMGQILSVFMVIVSLGILLY). Residue arginine 155 participates in a 1,2-diacyl-sn-glycero-3-phospho-(1'-sn-glycerol) binding.

Belongs to the Lgt family.

Its subcellular location is the cell inner membrane. It catalyses the reaction L-cysteinyl-[prolipoprotein] + a 1,2-diacyl-sn-glycero-3-phospho-(1'-sn-glycerol) = an S-1,2-diacyl-sn-glyceryl-L-cysteinyl-[prolipoprotein] + sn-glycerol 1-phosphate + H(+). Its pathway is protein modification; lipoprotein biosynthesis (diacylglyceryl transfer). Its function is as follows. Catalyzes the transfer of the diacylglyceryl group from phosphatidylglycerol to the sulfhydryl group of the N-terminal cysteine of a prolipoprotein, the first step in the formation of mature lipoproteins. The protein is Phosphatidylglycerol--prolipoprotein diacylglyceryl transferase of Helicobacter pylori (strain J99 / ATCC 700824) (Campylobacter pylori J99).